Here is a 490-residue protein sequence, read N- to C-terminus: Solute carrier family 2, facilitated glucose transporter member 1 (490 aa).

Over 1 to 10 the chain is Cytoplasmic; it reads MESGSKMTAR. A helical transmembrane segment spans residues 11 to 32; the sequence is LMLAVGGAVLGSLQFGYNTGVI. Residues 33–65 lie on the Extracellular side of the membrane; it reads NRPQKVIEDFYNHTWLYRYEEPISPATLTTLWS. An N-linked (GlcNAc...) asparagine glycan is attached at asparagine 44. Residues 66-86 traverse the membrane as a helical segment; the sequence is LSVAIFSVGGMIGSFSVGLFV. The Cytoplasmic portion of the chain corresponds to 87–89; sequence NRF. A helical transmembrane segment spans residues 90–111; it reads GRRNSMLMSNILAFLAAVLMGF. Over 112–119 the chain is Extracellular; it reads SKMALSFE. A helical membrane pass occupies residues 120-143; that stretch reads MLILGRFIIGLYSGLTTGFVPMYV. Residues 144–154 lie on the Cytoplasmic side of the membrane; the sequence is GEVSPTALRGA. A helical membrane pass occupies residues 155 to 175; the sequence is LGTFHQLGIVLGILIAQVFGL. Glutamine 160 contacts D-glucose. Topologically, residues 176 to 184 are extracellular; that stretch reads DLIMGNDSL. A helical membrane pass occupies residues 185-205; the sequence is WPLLLGFIFVPALLQCIILPF. Residues 206-270 lie on the Cytoplasmic side of the membrane; sequence APESPRFLLI…LFRSPMYRQP (65 aa). The chain crosses the membrane as a helical span at residues 271-292; it reads ILIAIVLQLSQQLSGINAVFYY. D-glucose-binding positions include 281–282 and asparagine 287; that span reads QQ. Topologically, residues 293-305 are extracellular; it reads STSIFEKSGVEQP. The helical transmembrane segment at 306-327 threads the bilayer; that stretch reads VYATIGSGVVNTAFTVVSLFVV. Asparagine 316 is a D-glucose binding site. Over 328-333 the chain is Cytoplasmic; the sequence is ERAGRR. The chain crosses the membrane as a helical span at residues 334 to 354; that stretch reads TLHLIGLAGMAGCAILMTIAL. The Extracellular portion of the chain corresponds to 355 to 364; the sequence is TLLDQMPWMS. The chain crosses the membrane as a helical span at residues 365-387; sequence YLSIVAIFGFVAFFEIGPGPIPW. D-glucose is bound by residues glutamate 379 and tryptophan 387. Topologically, residues 388–400 are cytoplasmic; sequence FIVAELFSQGPRP. The helical transmembrane segment at 401–421 threads the bilayer; that stretch reads AAFAVAGLSNWTSNFIVGMGF. The Extracellular segment spans residues 422-428; that stretch reads QYIAQLC. Residues 429-449 traverse the membrane as a helical segment; it reads GSYVFIIFTVLLVLFFIFTYF. At 450 to 490 the chain is on the cytoplasmic side; it reads KVPETKGRTFDEIAYRFRQGGASQSDKTPDEFHSLGADSQV. The interval 470–490 is disordered; it reads GASQSDKTPDEFHSLGADSQV.

This sequence belongs to the major facilitator superfamily. Sugar transporter (TC 2.A.1.1) family. Glucose transporter subfamily. In terms of assembly, interacts with isoform 1 of BSG. As to expression, retinal cones (at protein level).

It localises to the cell membrane. The protein resides in the photoreceptor inner segment. The enzyme catalyses D-glucose(out) = D-glucose(in). Functionally, facilitative glucose transporter, which is responsible for constitutive or basal glucose uptake. Has a very broad substrate specificity; can transport a wide range of aldoses including both pentoses and hexoses. Most important energy carrier of the brain: present at the blood-brain barrier and assures the energy-independent, facilitative transport of glucose into the brain. In association with BSG and NXNL1, promotes retinal cone survival by increasing glucose uptake into photoreceptors. Required for mesendoderm differentiation. The protein is Solute carrier family 2, facilitated glucose transporter member 1 of Gallus gallus (Chicken).